Consider the following 86-residue polypeptide: MNMTENANTADVSGYSFEKAVAELESIVARLERGDVALDESIAIYERGEALKKHCETLLNAAEKRIEKIRLDRAGKPQGVEPLDGE.

It belongs to the XseB family. In terms of assembly, heterooligomer composed of large and small subunits.

The protein localises to the cytoplasm. It catalyses the reaction Exonucleolytic cleavage in either 5'- to 3'- or 3'- to 5'-direction to yield nucleoside 5'-phosphates.. In terms of biological role, bidirectionally degrades single-stranded DNA into large acid-insoluble oligonucleotides, which are then degraded further into small acid-soluble oligonucleotides. The chain is Exodeoxyribonuclease 7 small subunit from Agrobacterium fabrum (strain C58 / ATCC 33970) (Agrobacterium tumefaciens (strain C58)).